Here is a 414-residue protein sequence, read N- to C-terminus: tRNA methyltransferase 10 homolog C (414 aa).

A mitochondrion-targeting transit peptide spans 1–35 (MNVTVRFLRPFARYLVPYTFHRTRSNSYSRVLQRY). Ser79 is modified (phosphoserine). Residues 133–162 (GKEMMKKAKQMKKEMKAAAREEAKRARSLE) are a coiled coil. The SAM-dependent MTase TRM10-type domain maps to 186 to 378 (LGWKGVQAMQ…KFVPRRKHTG (193 aa)).

Belongs to the class IV-like SAM-binding methyltransferase superfamily. TRM10 family. As to quaternary structure, component of mitochondrial ribonuclease P, a complex composed of TRMT10C/MRPP1, HSD17B10/MRPP2 and PRORP/MRPP3. Interacts with HSD17B10/MRPP2; forming the MRPP1-MRPP2 subcomplex of the mitochondrial ribonuclease P complex. Interacts with GRSF1.

Its subcellular location is the mitochondrion matrix. It localises to the mitochondrion nucleoid. It carries out the reaction adenosine(9) in tRNA + S-adenosyl-L-methionine = N(1)-methyladenosine(9) in tRNA + S-adenosyl-L-homocysteine + H(+). The catalysed reaction is guanosine(9) in tRNA + S-adenosyl-L-methionine = N(1)-methylguanosine(9) in tRNA + S-adenosyl-L-homocysteine + H(+). The enzyme catalyses an adenosine in mRNA + S-adenosyl-L-methionine = an N(1)-methyladenosine in mRNA + S-adenosyl-L-homocysteine + H(+). Functionally, mitochondrial tRNA N(1)-methyltransferase involved in mitochondrial tRNA maturation. Component of mitochondrial ribonuclease P, a complex composed of TRMT10C/MRPP1, HSD17B10/MRPP2 and PRORP/MRPP3, which cleaves tRNA molecules in their 5'-ends. Together with HSD17B10/MRPP2, forms a subcomplex of the mitochondrial ribonuclease P, named MRPP1-MRPP2 subcomplex, which displays functions that are independent of the ribonuclease P activity. The MRPP1-MRPP2 subcomplex catalyzes the formation of N(1)-methylguanine and N(1)-methyladenine at position 9 (m1G9 and m1A9, respectively) in tRNAs; TRMT10C/MRPP1 acting as the catalytic N(1)-methyltransferase subunit. The MRPP1-MRPP2 subcomplex also acts as a tRNA maturation platform: following 5'-end cleavage by the mitochondrial ribonuclease P complex, the MRPP1-MRPP2 subcomplex enhances the efficiency of 3'-processing catalyzed by ELAC2, retains the tRNA product after ELAC2 processing and presents the nascent tRNA to the mitochondrial CCA tRNA nucleotidyltransferase TRNT1 enzyme. In addition to tRNA N(1)-methyltransferase activity, TRMT10C/MRPP1 also acts as a mRNA N(1)-methyltransferase by mediating methylation of adenosine residues at the N(1) position of MT-ND5 mRNA. Associates with mitochondrial DNA complexes at the nucleoids to initiate RNA processing and ribosome assembly. The protein is tRNA methyltransferase 10 homolog C of Rattus norvegicus (Rat).